We begin with the raw amino-acid sequence, 524 residues long: Capsid scaffolding protein (524 aa).

Residues His-47, Ser-116, and His-137 each act as charge relay system in the active site. Residues 268–287 (DDLIPVPRSAFLNMLESTVS) are interaction with pAP. The Nuclear localization signal signature appears at 359-365 (RPRKRAR). The segment at 359–378 (RPRKRAREDPEDEVSFPGEE) is disordered. The tract at residues 504-524 (AETSKAATLQKLFCDEMLSKQ) is interaction with major capsid protein.

It belongs to the herpesviridae capsid scaffolding protein family. As to quaternary structure, homomultimer. Interacts with major capsid protein. Exists in a monomer-dimer equilibrium with the dimer being the active species. In terms of processing, capsid scaffolding protein is cleaved by assemblin after formation of the spherical procapsid. As a result, the capsid obtains its mature, icosahedral shape. Cleavages occur at two or more sites: release (R-site) and maturation (M-site).

It localises to the host cytoplasm. The protein resides in the host nucleus. It carries out the reaction Cleaves -Ala-|-Ser- and -Ala-|-Ala- bonds in the scaffold protein.. Functionally, acts as a scaffold protein by binding major capsid protein in the cytoplasm, inducing the nuclear localization of both proteins. Multimerizes in the nucleus such as major capsid protein forms the icosahedral T=16 capsid. Autocatalytic cleavage releases the assembly protein, and subsequently abolishes interaction with major capsid protein. Cleavages products are evicted from the capsid before or during DNA packaging. In terms of biological role, protease that plays an essential role in virion assembly within the nucleus. Catalyzes the cleavage of the assembly protein after formation of the spherical procapsid. By that cleavage, the capsid matures and gains its icosahedral shape. The cleavage sites seem to include -Ala-Ser-, -Ala-Ala-, as well as Ala-Thr bonds. Assemblin and cleavages products are evicted from the capsid before or during DNA packaging. Its function is as follows. Plays a major role in capsid assembly. Acts as a scaffold protein by binding major capsid protein. Multimerizes in the nucleus such as major capsid protein forms the icosahedral T=16 capsid. Cleaved by assemblin after capsid completion. The cleavages products are evicted from the capsid before or during DNA packaging. This chain is Capsid scaffolding protein (17), found in Connochaetes taurinus (Blue wildebeest).